The chain runs to 205 residues: Holliday junction resolvase RecU (205 aa).

The tract at residues 1–22 is disordered; that stretch reads MAINYPAGTRRRTAQAKNTMRT. Residues Thr90, Asp92, Asp105, and Gln124 each contribute to the Mg(2+) site.

This sequence belongs to the RecU family. Mg(2+) serves as cofactor.

It is found in the cytoplasm. The catalysed reaction is Endonucleolytic cleavage at a junction such as a reciprocal single-stranded crossover between two homologous DNA duplexes (Holliday junction).. In terms of biological role, endonuclease that resolves Holliday junction intermediates in genetic recombination. Cleaves mobile four-strand junctions by introducing symmetrical nicks in paired strands. Promotes annealing of linear ssDNA with homologous dsDNA. Required for DNA repair, homologous recombination and chromosome segregation. The protein is Holliday junction resolvase RecU of Leuconostoc citreum (strain KM20).